The chain runs to 196 residues: Holliday junction branch migration complex subunit RuvA (196 aa).

A domain I region spans residues 1–63; the sequence is MYDYIKGTLV…DDAHLLFGFH (63 aa). Residues 64–142 form a domain II region; the sequence is TEDEKEVFLK…ELPAETTNTT (79 aa). A flexible linker region spans residues 143–146; that stretch reads ANQT. The segment at 147–196 is domain III; sequence AGNQQLDEAMEALLALGYKATELKKVKAFFEDTNETAEQYIKSALKMLMK.

This sequence belongs to the RuvA family. As to quaternary structure, homotetramer. Forms an RuvA(8)-RuvB(12)-Holliday junction (HJ) complex. HJ DNA is sandwiched between 2 RuvA tetramers; dsDNA enters through RuvA and exits via RuvB. An RuvB hexamer assembles on each DNA strand where it exits the tetramer. Each RuvB hexamer is contacted by two RuvA subunits (via domain III) on 2 adjacent RuvB subunits; this complex drives branch migration. In the full resolvosome a probable DNA-RuvA(4)-RuvB(12)-RuvC(2) complex forms which resolves the HJ.

The protein resides in the cytoplasm. Its function is as follows. The RuvA-RuvB-RuvC complex processes Holliday junction (HJ) DNA during genetic recombination and DNA repair, while the RuvA-RuvB complex plays an important role in the rescue of blocked DNA replication forks via replication fork reversal (RFR). RuvA specifically binds to HJ cruciform DNA, conferring on it an open structure. The RuvB hexamer acts as an ATP-dependent pump, pulling dsDNA into and through the RuvAB complex. HJ branch migration allows RuvC to scan DNA until it finds its consensus sequence, where it cleaves and resolves the cruciform DNA. In Streptococcus thermophilus (strain ATCC BAA-491 / LMD-9), this protein is Holliday junction branch migration complex subunit RuvA.